Here is a 141-residue protein sequence, read N- to C-terminus: Hemoglobin subunit alpha-1 (141 aa).

The region spanning 1-141 (VLSGSDKNNV…VGNVLTAKYR (141 aa)) is the Globin domain. Residue His58 coordinates O2. His87 serves as a coordination point for heme b.

Belongs to the globin family. In terms of assembly, heterotetramer of two alpha chains and two beta chains. As to expression, red blood cells.

In terms of biological role, involved in oxygen transport from the lung to the various peripheral tissues. The polypeptide is Hemoglobin subunit alpha-1 (Stercorarius maccormicki (South polar skua)).